The following is a 275-amino-acid chain: Bis(5'-nucleosyl)-tetraphosphatase, symmetrical (275 aa).

It belongs to the Ap4A hydrolase family.

The enzyme catalyses P(1),P(4)-bis(5'-adenosyl) tetraphosphate + H2O = 2 ADP + 2 H(+). In terms of biological role, hydrolyzes diadenosine 5',5'''-P1,P4-tetraphosphate to yield ADP. In Photorhabdus laumondii subsp. laumondii (strain DSM 15139 / CIP 105565 / TT01) (Photorhabdus luminescens subsp. laumondii), this protein is Bis(5'-nucleosyl)-tetraphosphatase, symmetrical.